Reading from the N-terminus, the 395-residue chain is Acid ceramidase (395 aa).

An N-terminal signal peptide occupies residues 1–21; the sequence is MPGRSRVALVLLAAAVSCAVA. An intrachain disulfide couples C31 to C340. The Nucleophile role is filled by C143. N-linked (GlcNAc...) asparagine glycosylation is found at N195, N259, N286, and N342. A disulfide bridge connects residues C388 and C392.

The protein belongs to the acid ceramidase family. Heterodimer; disulfide-linked. The heterodimer is composed of the disulfide-linked alpha and beta chains produced by autocatalytic cleavage of the precursor. In terms of processing, N-glycosylated. Proteolytically cleaved into two chains alpha and beta that remain associated via a disulfide bond. Cleavage gives rise to a conformation change that activates the enzyme. The same catalytic Cys residue mediates the autoproteolytic cleavage and subsequent hydrolysis of lipid substrates. The beta chain may undergo an additional C-terminal processing.

The protein resides in the lysosome. Its subcellular location is the secreted. It carries out the reaction an N-acylsphing-4-enine + H2O = sphing-4-enine + a fatty acid. The catalysed reaction is N-dodecanoylsphing-4-enine + H2O = dodecanoate + sphing-4-enine. The enzyme catalyses N-tetradecanoylsphing-4-enine + H2O = tetradecanoate + sphing-4-enine. It catalyses the reaction N-hexadecanoylsphing-4-enine + H2O = sphing-4-enine + hexadecanoate. It carries out the reaction N-octadecanoylsphing-4-enine + H2O = sphing-4-enine + octadecanoate. The catalysed reaction is N-dodecanoyl-(4R)-hydroxysphinganine + H2O = (4R)-hydroxysphinganine + dodecanoate. The enzyme catalyses N-(dodecanoyl)-sphinganine + H2O = dodecanoate + sphinganine. It catalyses the reaction N-(acetyl)-sphing-4-enine + H2O = sphing-4-enine + acetate. It carries out the reaction N-(hexanoyl)sphing-4-enine + H2O = hexanoate + sphing-4-enine. The catalysed reaction is N-octanoylsphing-4-enine + H2O = octanoate + sphing-4-enine. The enzyme catalyses N-(9Z-octadecenoyl)-sphing-4-enine + H2O = sphing-4-enine + (9Z)-octadecenoate. It catalyses the reaction N-dodecanoylethanolamine + H2O = dodecanoate + ethanolamine. It participates in lipid metabolism; sphingolipid metabolism. Functionally, lysosomal ceramidase that hydrolyzes sphingolipid ceramides into sphingosine and free fatty acids at acidic pH. Ceramides, sphingosine, and its phosphorylated form sphingosine-1-phosphate are bioactive lipids that mediate cellular signaling pathways regulating several biological processes including cell proliferation, apoptosis and differentiation. Has a higher catalytic efficiency towards C12-ceramides versus other ceramides. Also catalyzes the reverse reaction allowing the synthesis of ceramides from fatty acids and sphingosine. For the reverse synthetic reaction, the natural sphingosine D-erythro isomer is more efficiently utilized as a substrate compared to D-erythro-dihydrosphingosine and D-erythro-phytosphingosine, while the fatty acids with chain lengths of 12 or 14 carbons are the most efficiently used. Also has an N-acylethanolamine hydrolase activity. By regulating the levels of ceramides, sphingosine and sphingosine-1-phosphate in the epidermis, mediates the calcium-induced differentiation of epidermal keratinocytes. Also indirectly regulates tumor necrosis factor/TNF-induced apoptosis. By regulating the intracellular balance between ceramides and sphingosine, in adrenocortical cells, probably also acts as a regulator of steroidogenesis. The polypeptide is Acid ceramidase (Pan troglodytes (Chimpanzee)).